Consider the following 365-residue polypeptide: Phosphoserine aminotransferase (365 aa).

Residue Arg-42 participates in L-glutamate binding. Residues 76-77 (GR), Trp-102, Thr-156, Asp-175, and Gln-198 contribute to the pyridoxal 5'-phosphate site. N6-(pyridoxal phosphate)lysine is present on Lys-199. Residue 240–241 (NT) participates in pyridoxal 5'-phosphate binding.

It belongs to the class-V pyridoxal-phosphate-dependent aminotransferase family. SerC subfamily. Homodimer. Requires pyridoxal 5'-phosphate as cofactor.

It localises to the cytoplasm. The catalysed reaction is O-phospho-L-serine + 2-oxoglutarate = 3-phosphooxypyruvate + L-glutamate. It catalyses the reaction 4-(phosphooxy)-L-threonine + 2-oxoglutarate = (R)-3-hydroxy-2-oxo-4-phosphooxybutanoate + L-glutamate. Its pathway is amino-acid biosynthesis; L-serine biosynthesis; L-serine from 3-phospho-D-glycerate: step 2/3. It participates in cofactor biosynthesis; pyridoxine 5'-phosphate biosynthesis; pyridoxine 5'-phosphate from D-erythrose 4-phosphate: step 3/5. Its function is as follows. Catalyzes the reversible conversion of 3-phosphohydroxypyruvate to phosphoserine and of 3-hydroxy-2-oxo-4-phosphonooxybutanoate to phosphohydroxythreonine. This chain is Phosphoserine aminotransferase, found in Shewanella oneidensis (strain ATCC 700550 / JCM 31522 / CIP 106686 / LMG 19005 / NCIMB 14063 / MR-1).